A 102-amino-acid polypeptide reads, in one-letter code: Small ribosomal subunit protein uS10 (102 aa).

The protein belongs to the universal ribosomal protein uS10 family. In terms of assembly, part of the 30S ribosomal subunit.

In terms of biological role, involved in the binding of tRNA to the ribosomes. The polypeptide is Small ribosomal subunit protein uS10 (Thermotoga neapolitana (strain ATCC 49049 / DSM 4359 / NBRC 107923 / NS-E)).